The primary structure comprises 24 residues: DYE-linked aldehyde dehydrogenase, alpha chain (24 aa).

Heterotetramer composed of an alpha, a beta and two gamma chains. Requires Mo-molybdopterin cytosine dinucleotide as cofactor.

Active with aldehydes and formate esters as substrates. In Amycolatopsis methanolica, this protein is DYE-linked aldehyde dehydrogenase, alpha chain.